The sequence spans 370 residues: Small ribosomal subunit biogenesis GTPase RsgA (370 aa).

A CP-type G domain is found at 97-255; sequence QTQLDRPPIA…LADTPGFNQP (159 aa). GTP is bound by residues 146–149 and 197–205; these read NKSD and GPSGVGKSS. Residues Cys-280, Cys-285, His-287, and Cys-293 each coordinate Zn(2+). Residues 328 to 370 form a disordered region; sequence TLKLKTKGKGQSQYEPKLESKKYRRTSRRTQVQGLQDLYQEEE.

Belongs to the TRAFAC class YlqF/YawG GTPase family. RsgA subfamily. As to quaternary structure, monomer. Associates with 30S ribosomal subunit, binds 16S rRNA. Zn(2+) is required as a cofactor.

The protein localises to the cytoplasm. In terms of biological role, one of several proteins that assist in the late maturation steps of the functional core of the 30S ribosomal subunit. Helps release RbfA from mature subunits. May play a role in the assembly of ribosomal proteins into the subunit. Circularly permuted GTPase that catalyzes slow GTP hydrolysis, GTPase activity is stimulated by the 30S ribosomal subunit. The protein is Small ribosomal subunit biogenesis GTPase RsgA of Trichormus variabilis (strain ATCC 29413 / PCC 7937) (Anabaena variabilis).